The sequence spans 395 residues: Dihydroorotate dehydrogenase (quinone), mitochondrial (395 aa).

Residues 1–10 (MAWRQLRKRA) constitute a mitochondrion; not cleaved transit peptide. Over 1 to 10 (MAWRQLRKRA) the chain is Mitochondrial matrix. A helical transmembrane segment spans residues 11 to 30 (LDAAIILGGGGLLFTSYLTA). Over 31 to 395 (TGDDHFYAEY…TDAIGVDHRR (365 aa)) the chain is Mitochondrial intermembrane. FMN contacts are provided by residues 95–99 (AGFDK) and serine 119. Residue lysine 99 coordinates substrate. 144–148 (NRYGF) is a substrate binding site. FMN is bound by residues asparagine 180 and asparagine 211. Residue 211 to 216 (NVSSPN) coordinates substrate. Serine 214 functions as the Nucleophile in the catalytic mechanism. Residues lysine 254 and threonine 282 each contribute to the FMN site. Position 283 to 284 (283 to 284 (NT)) interacts with substrate. FMN is bound by residues glycine 305, glycine 334, and 355 to 356 (YT).

It belongs to the dihydroorotate dehydrogenase family. Type 2 subfamily. In terms of assembly, monomer. Requires FMN as cofactor. The uncleaved transit peptide is required for mitochondrial targeting and proper membrane integration.

Its subcellular location is the mitochondrion inner membrane. The enzyme catalyses (S)-dihydroorotate + a quinone = orotate + a quinol. It participates in pyrimidine metabolism; UMP biosynthesis via de novo pathway; orotate from (S)-dihydroorotate (quinone route): step 1/1. In terms of biological role, catalyzes the conversion of dihydroorotate to orotate with quinone as electron acceptor. Required for UMP biosynthesis via de novo pathway. The protein is Dihydroorotate dehydrogenase (quinone), mitochondrial (Dhodh) of Mus musculus (Mouse).